The chain runs to 33 residues: uncharacterized protein (33 aa).

Residues 1–24 are disordered; it reads MRTGTRCDLGELSHPRKTLPPRGM.

This is an uncharacterized protein from Treponema pallidum (strain Nichols).